Here is a 404-residue protein sequence, read N- to C-terminus: S-adenosylmethionine synthase (404 aa).

His-17 provides a ligand contact to ATP. Asp-19 contributes to the Mg(2+) binding site. Residue Glu-45 participates in K(+) binding. L-methionine is bound by residues Glu-58 and Gln-101. The interval 101–111 is flexible loop; sequence QSPDIAMGVDQ. ATP contacts are provided by residues 177 to 179, 244 to 245, Asp-253, 259 to 260, Ala-276, and Lys-280; these read DGK, RF, and RK. Asp-253 serves as a coordination point for L-methionine. Residue Lys-284 participates in L-methionine binding.

It belongs to the AdoMet synthase family. Homotetramer; dimer of dimers. It depends on Mg(2+) as a cofactor. K(+) is required as a cofactor.

The protein resides in the cytoplasm. The catalysed reaction is L-methionine + ATP + H2O = S-adenosyl-L-methionine + phosphate + diphosphate. The protein operates within amino-acid biosynthesis; S-adenosyl-L-methionine biosynthesis; S-adenosyl-L-methionine from L-methionine: step 1/1. In terms of biological role, catalyzes the formation of S-adenosylmethionine (AdoMet) from methionine and ATP. The overall synthetic reaction is composed of two sequential steps, AdoMet formation and the subsequent tripolyphosphate hydrolysis which occurs prior to release of AdoMet from the enzyme. The chain is S-adenosylmethionine synthase from Geobacillus thermodenitrificans (strain NG80-2).